Consider the following 350-residue polypeptide: Eukaryotic translation initiation factor 3 subunit I (350 aa).

WD repeat units follow at residues 8-49, 51-89, 91-135, 149-190, 198-240, and 296-335; these read GHER…GTLE, HQGV…CVYT, NSPS…ASLT, QNGS…KSLQ, EKNV…KVYK, and GHFG…KDFL.

This sequence belongs to the eIF-3 subunit I family. As to quaternary structure, component of the eukaryotic translation initiation factor 3 (eIF-3) complex.

The protein localises to the cytoplasm. In terms of biological role, component of the eukaryotic translation initiation factor 3 (eIF-3) complex, which is involved in protein synthesis of a specialized repertoire of mRNAs and, together with other initiation factors, stimulates binding of mRNA and methionyl-tRNAi to the 40S ribosome. The eIF-3 complex specifically targets and initiates translation of a subset of mRNAs involved in cell proliferation. The protein is Eukaryotic translation initiation factor 3 subunit I of Lodderomyces elongisporus (strain ATCC 11503 / CBS 2605 / JCM 1781 / NBRC 1676 / NRRL YB-4239) (Yeast).